Reading from the N-terminus, the 128-residue chain is 3-aminoacrylate deaminase RutC (128 aa).

It belongs to the RutC family. In terms of assembly, homotrimer.

The catalysed reaction is (Z)-3-aminoacrylate + H2O + H(+) = 3-oxopropanoate + NH4(+). Its function is as follows. Involved in pyrimidine catabolism. Catalyzes the deamination of 3-aminoacrylate to malonic semialdehyde, a reaction that can also occur spontaneously. RutC may facilitate the reaction and modulate the metabolic fitness, rather than catalyzing essential functions. This Escherichia coli O111:H- (strain 11128 / EHEC) protein is 3-aminoacrylate deaminase RutC.